The sequence spans 224 residues: Ribonuclease HII (224 aa).

The 210-residue stretch at 1 to 210 (MKIGGIDEAG…VRKIEESIKA (210 aa)) folds into the RNase H type-2 domain. 3 residues coordinate a divalent metal cation: aspartate 7, glutamate 8, and aspartate 105.

It belongs to the RNase HII family. Requires Mn(2+) as cofactor. The cofactor is Mg(2+).

It localises to the cytoplasm. The catalysed reaction is Endonucleolytic cleavage to 5'-phosphomonoester.. Functionally, endonuclease that specifically degrades the RNA of RNA-DNA hybrids. The chain is Ribonuclease HII from Pyrococcus furiosus (strain ATCC 43587 / DSM 3638 / JCM 8422 / Vc1).